The primary structure comprises 232 residues: Cell cycle response regulator CtrA (232 aa).

A Response regulatory domain is found at 2–116; sequence RVLLIEDDSA…ELIARIHAIV (115 aa). 4-aspartylphosphate is present on Asp-51. Positions 124-223 form a DNA-binding region, ompR/PhoB-type; sequence QSVITTGDLV…VWGRGYVLRE (100 aa).

Forms an asymmetric heterotetramer with ChpT (2:2). There are at least two modes of interaction between ChpT and CtrA, only one of which is competent to catalyze His-Asp phosphoryl transfer. Is phosphorylated by ChpT-P on Asp-51.

It is found in the cytoplasm. Component of a regulatory phosphorelay system that controls B.abortus cell growth, division, and intracellular survival inside mammalian host cells. This signaling pathway is composed of CckA, ChpT, CtrA and CpdR. CtrA is a response regulator substrate of ChpT. When phosphorylated, directly regulates the expression of ccrM. Is also probably involved in the transcriptional regulation of rpoD, pleC, minC and ftsE genes. This Brucella abortus (strain S19) protein is Cell cycle response regulator CtrA (ctrA).